The chain runs to 58 residues: MAKTIVHENESIDDALRRFKRSVSRSGTLQEYRKREFYEKPSVKRKLKSEAARKRRHY.

It belongs to the bacterial ribosomal protein bS21 family.

This chain is Small ribosomal subunit protein bS21, found in Lactobacillus johnsonii (strain CNCM I-12250 / La1 / NCC 533).